We begin with the raw amino-acid sequence, 362 residues long: Heat-inducible transcription repressor HrcA (362 aa).

This sequence belongs to the HrcA family.

Functionally, negative regulator of class I heat shock genes (grpE-dnaK-dnaJ and groELS operons). Prevents heat-shock induction of these operons. The chain is Heat-inducible transcription repressor HrcA from Rhizobium leguminosarum bv. trifolii (strain WSM2304).